The primary structure comprises 290 residues: HTH-type transcriptional activator RhaR (290 aa).

Residues Asp179–Arg277 form the HTH araC/xylS-type domain. 2 DNA-binding regions (H-T-H motif) span residues Ala196 to Thr217 and Ile244 to Ala267.

Binds DNA as a dimer.

It localises to the cytoplasm. Functionally, activates expression of the rhaSR operon in response to L-rhamnose. In Yersinia pestis bv. Antiqua (strain Antiqua), this protein is HTH-type transcriptional activator RhaR.